A 378-amino-acid polypeptide reads, in one-letter code: Outer membrane porin C (378 aa).

A signal peptide spans 1-21; sequence MKVKVLSLLVPALLVAGAANA.

Belongs to the Gram-negative porin family. In terms of assembly, homotrimer.

It localises to the cell outer membrane. Its function is as follows. Forms pores that allow passive diffusion of small molecules across the outer membrane. The polypeptide is Outer membrane porin C (ompC) (Salmonella typhimurium (strain LT2 / SGSC1412 / ATCC 700720)).